The following is a 502-amino-acid chain: MSKDFILAIDQGTTSSRAIIFDKKGNIRKIAQKEFTQIYPKSGWVEHDAMEIWGTQSGVMREALEFGRVKPDQIAAIGITNQRETVVVWDKETGDPVYNAIVWQCRRTSSICDEIKRDPQFVKYIKENTGLVVDAYFSGTKVKWILDNVEGAREKANAGKLLMGTIDTWLIWNLTRGKVHATDYSNASRTMLFNINSLEWDKKILDYLNIPESMLPEVKNSSEVFGVTDSHTLGGAEIPIAGVAGDQHAALFGHCCFEKGMAKNTYGTGCFALMNVGDKPVYSDEGLLTTIAWAENGKPTYALEGSIFIVGAVIQWIRDGLGLVRSAEDSEYYATKIDSTNGVYLVPAFVGLGTPYWDMYARGTIVGITRDTKREHIIRAALEAIAYQAKDVLECMKEDTGLDLAGLRVDGGAVQNNFLMQFQSDILQSEISKPKINEITSLGAVFLAGLAVGFWKDKQELKSILTTEKVFEPQKDSQAVAHDYRGWKKAVERSKAWAECYS.

Position 13 (T13) interacts with ADP. T13, T14, and S15 together coordinate ATP. Position 13 (T13) interacts with sn-glycerol 3-phosphate. R17 contributes to the ADP binding site. Residues R83, E84, Y136, and D246 each coordinate sn-glycerol 3-phosphate. Glycerol-binding residues include R83, E84, Y136, D246, and Q247. ADP-binding residues include T268 and G311. Residues T268, G311, Q315, and G412 each coordinate ATP. 2 residues coordinate ADP: G412 and N416.

The protein belongs to the FGGY kinase family.

The catalysed reaction is glycerol + ATP = sn-glycerol 3-phosphate + ADP + H(+). Its pathway is polyol metabolism; glycerol degradation via glycerol kinase pathway; sn-glycerol 3-phosphate from glycerol: step 1/1. Inhibited by fructose 1,6-bisphosphate (FBP). Functionally, key enzyme in the regulation of glycerol uptake and metabolism. Catalyzes the phosphorylation of glycerol to yield sn-glycerol 3-phosphate. This chain is Glycerol kinase, found in Francisella tularensis subsp. holarctica (strain FTNF002-00 / FTA).